Here is a 577-residue protein sequence, read N- to C-terminus: Protein NUCLEOLAR COMPLEX ASSOCIATED 4 (577 aa).

Positions Pro230 to Gly263 are disordered. Transmembrane regions (helical) follow at residues Ile329–Gly349, Leu350–Ala370, and Leu404–Leu424.

It belongs to the CBF/MAK21 family. As to quaternary structure, component of the ribosomal small subunit (SSU) processome composed of at least 40 protein subunits and snoRNA U3. In terms of tissue distribution, mostly expressed in flowers and stems and at lower levels in roots, hypocotyls, siliques, leaves and seeds.

The protein localises to the nucleus membrane. Its subcellular location is the nucleus. It localises to the nucleolus. Essential protein required during embryogenesis. Involved in nucleolar processing of ribosomal RNA (rRNA) 40S and 90S ribosomal subunits and ribosome assembly; early in ribosome biogenesis, especially required during the maturation of 5.8S rRNA. Has a role in the nuclear export of 40S pre-ribosomal subunit to the cytoplasm. The chain is Protein NUCLEOLAR COMPLEX ASSOCIATED 4 from Arabidopsis thaliana (Mouse-ear cress).